A 239-amino-acid polypeptide reads, in one-letter code: tRNA (guanine-N(7)-)-methyltransferase (239 aa).

Glu69, Glu94, Asp121, and Asp144 together coordinate S-adenosyl-L-methionine. Asp144 is a catalytic residue. Lys148 contributes to the substrate binding site. Residues 150–155 are interaction with RNA; sequence RHNKRR. Substrate contacts are provided by residues Asp180 and 217–220; that span reads TKFE.

Belongs to the class I-like SAM-binding methyltransferase superfamily. TrmB family. As to quaternary structure, monomer.

It carries out the reaction guanosine(46) in tRNA + S-adenosyl-L-methionine = N(7)-methylguanosine(46) in tRNA + S-adenosyl-L-homocysteine. It functions in the pathway tRNA modification; N(7)-methylguanine-tRNA biosynthesis. In terms of biological role, catalyzes the formation of N(7)-methylguanine at position 46 (m7G46) in tRNA. This chain is tRNA (guanine-N(7)-)-methyltransferase, found in Serratia proteamaculans (strain 568).